A 422-amino-acid polypeptide reads, in one-letter code: Cytochrome P450-pinF1, plant-inducible (422 aa).

Cysteine 369 contacts heme.

Belongs to the cytochrome P450 family. The cofactor is heme.

Its function is as follows. Not essential for virulence, but may be involved in the detoxification of plant protective agents at the site of wounding. This is Cytochrome P450-pinF1, plant-inducible (cyp103) from Rhizobium radiobacter (Agrobacterium tumefaciens).